The sequence spans 194 residues: Histone H1.0 (194 aa).

Met1 carries the N-acetylmethionine modification. The span at 1–11 shows a compositional bias: low complexity; the sequence is MTENSTSTPAA. The disordered stretch occupies residues 1–29; it reads MTENSTSTPAAKPKRAKASKKSTDHPKYS. Thr2 carries the N-acetylthreonine; in Histone H1.0, N-terminally processed modification. One can recognise an H15 domain in the interval 24 to 97; that stretch reads DHPKYSDMIV…GASGSFRLAK (74 aa). Arg42 carries the citrulline modification. The interval 83–194 is disordered; that stretch reads QTKGVGASGS…SSAKRTGKKK (112 aa). Residue Ser104 is modified to ADP-ribosylserine. Basic residues predominate over residues 105–194; sequence VAFKKTKKEV…SSAKRTGKKK (90 aa).

The protein belongs to the histone H1/H5 family. Post-translationally, ADP-ribosylated on Ser-104 in response to DNA damage.

The protein localises to the nucleus. It localises to the chromosome. Histones H1 are necessary for the condensation of nucleosome chains into higher-order structures. The histones H1.0 are found in cells that are in terminal stages of differentiation or that have low rates of cell division. This chain is Histone H1.0 (H1-0), found in Bos taurus (Bovine).